A 126-amino-acid chain; its full sequence is MGKDKNPRRVADNEAMAKVRMLRTSPQKLNLVAQMIRGKKVDKALTDLTFSNKRIAQDVKKCLQSAIANAENNHNLDVDELIVAEAWVGKNLTMKRGRPRARGRFGKILKPFAEITIKVRQVEEQA.

This sequence belongs to the universal ribosomal protein uL22 family. As to quaternary structure, part of the 50S ribosomal subunit.

This protein binds specifically to 23S rRNA; its binding is stimulated by other ribosomal proteins, e.g. L4, L17, and L20. It is important during the early stages of 50S assembly. It makes multiple contacts with different domains of the 23S rRNA in the assembled 50S subunit and ribosome. Its function is as follows. The globular domain of the protein is located near the polypeptide exit tunnel on the outside of the subunit, while an extended beta-hairpin is found that lines the wall of the exit tunnel in the center of the 70S ribosome. In Ruegeria sp. (strain TM1040) (Silicibacter sp.), this protein is Large ribosomal subunit protein uL22.